The chain runs to 551 residues: Prunin 1 Pru du 6.0101 (551 aa).

The signal sequence occupies residues 1–20 (MAKAFVFSLCLLLVFNGCLA). 2 disulfide bridges follow: Cys-32/Cys-65 and Cys-108/Cys-374. The region spanning 37-312 (LQAREPDNRI…ALNVNEETAR (276 aa)) is the Cupin type-1 1 domain. Disordered regions lie at residues 111–194 (TFEE…QKTR), 238–293 (NPRK…NVFS), and 311–361 (ARNL…QQQG). Composition is skewed to low complexity over residues 114-124 (ESQQSSQQGRQ), 132-148 (QQQQ…QQEQ), and 168-185 (QEQQ…QQFR). 4 igE-binding regions span residues 118–132 (SSQQ…QERQ), 145–159 (QQEQ…QQGR), 161–175 (QQEE…QGQQ), and 225–239 (LFHV…DQNP). Positions 254–275 (QQGQSQPRQQGEQGRPGQHQQP) are enriched in low complexity. The igE-binding stretch occupies residues 281-295 (QQEQQGSGNNVFSGF). 2 stretches are compositionally biased toward polar residues: residues 282–293 (QEQQGSGNNVFS) and 311–323 (ARNL…NRNQ). Basic and acidic residues predominate over residues 339-350 (GRQEREHEERQQ). Residues 351–361 (EQLQQERQQQG) are compositionally biased toward low complexity. Residues 367–372 (NGLEET) carry the NGXEET; peptidase recognition motif motif. Residues 380-529 (ENIGNPERAD…AYQISREQAR (150 aa)) enclose the Cupin type-1 2 domain. The tract at residues 510 to 524 (RALPDEVLANAYQIS) is igE-binding.

Belongs to the 11S seed storage protein (globulins) family. Hexamer of two trimers; each subunit is composed of an acidic and a basic chain derived from a single precursor and linked by a disulfide bond. Post-translationally, proteolytically processed from a single precursor to produce an acidic and a basic chain that are linked by a disulfide bond. Expressed in seed (at protein level).

Functionally, seed storage protein. The protein is Prunin 1 Pru du 6.0101 of Prunus dulcis (Almond).